Consider the following 270-residue polypeptide: Tetraspanin-17 (270 aa).

Residues 1-19 (MPGKHQHFQEPEVGCCGKY) lie on the Cytoplasmic side of the membrane. Residues 20–40 (FLFGFNIVFWVLGALFLAIGL) traverse the membrane as a helical segment. The Extracellular portion of the chain corresponds to 41 to 63 (WAWSEKGVLSNISALTDLGGLDP). A glycan (N-linked (GlcNAc...) asparagine) is linked at asparagine 51. The helical transmembrane segment at 64–84 (VWLFVVVGGVMSVLGFAGCIG) threads the bilayer. Residues 85–94 (ALRENTFLLK) lie on the Cytoplasmic side of the membrane. The helical transmembrane segment at 95–115 (FFSVFLGLIFFLELATGILAF) threads the bilayer. Topologically, residues 116–234 (VFKDWIRDQL…GQFEKWLQDN (119 aa)) are extracellular. 4 disulfides stabilise this stretch: cysteine 155–cysteine 223, cysteine 156–cysteine 188, cysteine 172–cysteine 182, and cysteine 189–cysteine 202. A glycan (N-linked (GlcNAc...) asparagine) is linked at asparagine 171. The chain crosses the membrane as a helical span at residues 235–255 (LIVVAGVFVGIALLQIFGICL). Residues 256 to 270 (AQNLVSDIKAVKANW) lie on the Cytoplasmic side of the membrane.

Belongs to the tetraspanin (TM4SF) family. Interacts with ADAM10; the interaction influences ADAM10 substrate specificity, endocytosis and turnover.

It is found in the cell membrane. Part of TspanC8 subgroup, composed of 6 members that interact with the transmembrane metalloprotease ADAM10. This interaction is required for ADAM10 exit from the endoplasmic reticulum and for enzymatic maturation and trafficking to the cell surface as well as substrate specificity. Different TspanC8/ADAM10 complexes have distinct substrates. Seems to regulate VE-cadherin expression in endothelial cells probably through interaction with ADAM10, promoting leukocyte transmigration. This Bos taurus (Bovine) protein is Tetraspanin-17 (TSPAN17).